The primary structure comprises 214 residues: Thiamine-phosphate synthase (214 aa).

Residues 40–44 and Asn72 contribute to the 4-amino-2-methyl-5-(diphosphooxymethyl)pyrimidine site; that span reads QLREK. Positions 73 and 92 each coordinate Mg(2+). Ser110 lines the 4-amino-2-methyl-5-(diphosphooxymethyl)pyrimidine pocket. Position 137-139 (137-139) interacts with 2-[(2R,5Z)-2-carboxy-4-methylthiazol-5(2H)-ylidene]ethyl phosphate; it reads SPT. Residue Lys140 coordinates 4-amino-2-methyl-5-(diphosphooxymethyl)pyrimidine. 2-[(2R,5Z)-2-carboxy-4-methylthiazol-5(2H)-ylidene]ethyl phosphate is bound by residues Gly167 and 185 to 186; that span reads IS.

It belongs to the thiamine-phosphate synthase family. Requires Mg(2+) as cofactor.

The catalysed reaction is 2-[(2R,5Z)-2-carboxy-4-methylthiazol-5(2H)-ylidene]ethyl phosphate + 4-amino-2-methyl-5-(diphosphooxymethyl)pyrimidine + 2 H(+) = thiamine phosphate + CO2 + diphosphate. It catalyses the reaction 2-(2-carboxy-4-methylthiazol-5-yl)ethyl phosphate + 4-amino-2-methyl-5-(diphosphooxymethyl)pyrimidine + 2 H(+) = thiamine phosphate + CO2 + diphosphate. It carries out the reaction 4-methyl-5-(2-phosphooxyethyl)-thiazole + 4-amino-2-methyl-5-(diphosphooxymethyl)pyrimidine + H(+) = thiamine phosphate + diphosphate. The protein operates within cofactor biosynthesis; thiamine diphosphate biosynthesis; thiamine phosphate from 4-amino-2-methyl-5-diphosphomethylpyrimidine and 4-methyl-5-(2-phosphoethyl)-thiazole: step 1/1. Its function is as follows. Condenses 4-methyl-5-(beta-hydroxyethyl)thiazole monophosphate (THZ-P) and 2-methyl-4-amino-5-hydroxymethyl pyrimidine pyrophosphate (HMP-PP) to form thiamine monophosphate (TMP). This chain is Thiamine-phosphate synthase, found in Wolinella succinogenes (strain ATCC 29543 / DSM 1740 / CCUG 13145 / JCM 31913 / LMG 7466 / NCTC 11488 / FDC 602W) (Vibrio succinogenes).